The following is a 316-amino-acid chain: Endochitinase WIN8 (316 aa).

Residues 1–23 (MRFWALTVLSLLLSLLLGVSSDT) form the signal peptide. Residues 24-64 (AQCGSQAGNATCPNDLCCSSGGYCGLTVAYCCAGCVSQCRN) enclose the Chitin-binding type-1 domain. 7 disulfides stabilise this stretch: Cys26–Cys41, Cys35–Cys47, Cys40–Cys54, Cys58–Cys62, Cys84–Cys146, Cys158–Cys168, and Cys266–Cys298. Glu128 acts as the Proton donor in catalysis.

It belongs to the glycosyl hydrolase 19 family. Chitinase class I subfamily.

The enzyme catalyses Random endo-hydrolysis of N-acetyl-beta-D-glucosaminide (1-&gt;4)-beta-linkages in chitin and chitodextrins.. Its function is as follows. Defense against chitin-containing fungal pathogens. The sequence is that of Endochitinase WIN8 (WIN8) from Populus trichocarpa (Western balsam poplar).